The sequence spans 566 residues: Proline--tRNA ligase 1 (566 aa).

It belongs to the class-II aminoacyl-tRNA synthetase family. ProS type 1 subfamily. In terms of assembly, homodimer.

The protein resides in the cytoplasm. It catalyses the reaction tRNA(Pro) + L-proline + ATP = L-prolyl-tRNA(Pro) + AMP + diphosphate. Catalyzes the attachment of proline to tRNA(Pro) in a two-step reaction: proline is first activated by ATP to form Pro-AMP and then transferred to the acceptor end of tRNA(Pro). As ProRS can inadvertently accommodate and process non-cognate amino acids such as alanine and cysteine, to avoid such errors it has two additional distinct editing activities against alanine. One activity is designated as 'pretransfer' editing and involves the tRNA(Pro)-independent hydrolysis of activated Ala-AMP. The other activity is designated 'posttransfer' editing and involves deacylation of mischarged Ala-tRNA(Pro). The misacylated Cys-tRNA(Pro) is not edited by ProRS. This chain is Proline--tRNA ligase 1, found in Bacillus cereus (strain ZK / E33L).